The primary structure comprises 255 residues: Imidazole glycerol phosphate synthase subunit HisF (255 aa).

Residues Asp11 and Asp130 contribute to the active site.

The protein belongs to the HisA/HisF family. As to quaternary structure, heterodimer of HisH and HisF.

The protein resides in the cytoplasm. The enzyme catalyses 5-[(5-phospho-1-deoxy-D-ribulos-1-ylimino)methylamino]-1-(5-phospho-beta-D-ribosyl)imidazole-4-carboxamide + L-glutamine = D-erythro-1-(imidazol-4-yl)glycerol 3-phosphate + 5-amino-1-(5-phospho-beta-D-ribosyl)imidazole-4-carboxamide + L-glutamate + H(+). It functions in the pathway amino-acid biosynthesis; L-histidine biosynthesis; L-histidine from 5-phospho-alpha-D-ribose 1-diphosphate: step 5/9. Functionally, IGPS catalyzes the conversion of PRFAR and glutamine to IGP, AICAR and glutamate. The HisF subunit catalyzes the cyclization activity that produces IGP and AICAR from PRFAR using the ammonia provided by the HisH subunit. This chain is Imidazole glycerol phosphate synthase subunit HisF, found in Campylobacter lari (strain RM2100 / D67 / ATCC BAA-1060).